We begin with the raw amino-acid sequence, 326 residues long: MAVYTDINEIELGAFLRHYDIGTLTSYKGIAEGVENSNYLLHTSSGSFILTLYEKRTNREDLPFFLGLMQHLAKRGLECPQPVVRNDGAMIGQLAGRPAAIVTFLEGMWMRRPTVAHCEAVGEGLAHMHLAGADFPMRRRNGLTLPDWRPLWNLSRKCADTVEQGLVAETEADLDFLEKNWPADLPQGVIHADLFPDNAFFLGDRLSGFIDFYFACTDILAYDVAVCLNAWCFEKDFSYNRTKGAALLRGYTSVRPLSEAEADALPVLARGAAVRFMLTRLYDWLTVPAGSFVVKKDPMEYVRGMRFHRQIESAAEYGLEMQEVAA.

It belongs to the pseudomonas-type ThrB family.

The enzyme catalyses L-homoserine + ATP = O-phospho-L-homoserine + ADP + H(+). The protein operates within amino-acid biosynthesis; L-threonine biosynthesis; L-threonine from L-aspartate: step 4/5. This is Homoserine kinase from Brucella ovis (strain ATCC 25840 / 63/290 / NCTC 10512).